A 154-amino-acid chain; its full sequence is Acidic phospholipase A2 2 (154 aa).

Residues 1–19 form the signal peptide; sequence MHPAHLLVPLGVCVSLLGA. A propeptide spanning residues 20-27 is cleaved from the precursor; the sequence is ARIPPLPL. 7 disulfide bridges follow: Cys38–Cys104, Cys54–Cys153, Cys56–Cys72, Cys71–Cys132, Cys78–Cys125, Cys88–Cys118, and Cys111–Cys123. Tyr55, Gly57, and Gly59 together coordinate Ca(2+). The active site involves His75. Asp76 is a binding site for Ca(2+). Asp126 is an active-site residue.

Belongs to the phospholipase A2 family. Group I subfamily. D49 sub-subfamily. In terms of assembly, monomer. Ca(2+) is required as a cofactor. In terms of tissue distribution, expressed by the venom gland.

It is found in the secreted. The enzyme catalyses a 1,2-diacyl-sn-glycero-3-phosphocholine + H2O = a 1-acyl-sn-glycero-3-phosphocholine + a fatty acid + H(+). Snake venom phospholipase A2 (PLA2) that shows moderate enzymatic activity and exhibits procoagulant activity. PLA2 catalyzes the calcium-dependent hydrolysis of the 2-acyl groups in 3-sn-phosphoglycerides. The sequence is that of Acidic phospholipase A2 2 from Pseudonaja textilis (Eastern brown snake).